Consider the following 505-residue polypeptide: Calcium/calmodulin-dependent protein kinase kinase 1 (505 aa).

The tract at residues 27–66 is disordered; it reads HLEEAEEGPEPASNGVDPPPRARAASVIPGSASRPTPVRP. 2 positions are modified to phosphoserine: Ser67 and Ser74. Residue Arg78 is modified to Asymmetric dimethylarginine. Ser100 bears the Phosphoserine mark. Phosphothreonine is present on Thr108. One can recognise a Protein kinase domain in the interval 128 to 409; that stretch reads YKLQSEIGKG…VSDIKLHPWV (282 aa). Residues 134–142 and Lys157 each bind ATP; that span reads IGKGAYGVV. Positions 167 to 189 are RP domain; that stretch reads QYGFPRRPPPRGSQAPQGGPAKQ. Asp275 acts as the Proton acceptor in catalysis. Positions 435 to 440 are autoinhibitory domain; it reads KNSVKL. Residues 438-463 form a calmodulin-binding region; it reads VKLIPSWTTVILVKSMLRKRSFGNPF. Phosphoserine occurs at positions 458, 475, and 492. Residues 460–505 are disordered; that stretch reads GNPFEPQARREERSMSAPGNLLLKEGCGEGGKSPELPGVQEDEAAS.

This sequence belongs to the protein kinase superfamily. Ser/Thr protein kinase family. Interacts with CAMK4 and calmodulin. Post-translationally, appears to be autophosphorylated. Phosphorylated at multiple sites by PRCAKA/PKA. Phosphorylation of Ser-458 is blocked upon binding to Ca(2+)/calmodulin. May be phosphorylated by CAMK1 and CAMK4. In terms of tissue distribution, mostly expressed in the brain with higher levels in cortex and hippocampus. Lower expression levels were detected in striatum, nucleus accumbens and cerebellum (at protein level). Abundant in forebrain, weaker in cerebellum and also detected in thymus and spleen.

Its subcellular location is the cytoplasm. The protein resides in the nucleus. It catalyses the reaction L-seryl-[protein] + ATP = O-phospho-L-seryl-[protein] + ADP + H(+). The catalysed reaction is L-threonyl-[protein] + ATP = O-phospho-L-threonyl-[protein] + ADP + H(+). Activated by Ca(2+)/calmodulin. Binding of calmodulin may relieve intrasteric autoinhibition. Partially inhibited upon phosphorylation by PRCAKA/PKA. May be regulated through phosphorylation by CAMK1 and CAMK4. Calcium/calmodulin-dependent protein kinase that belongs to a proposed calcium-triggered signaling cascade involved in a number of cellular processes. Phosphorylates CAMK1, CAMK1D, CAMK1G and CAMK4. Involved in regulating cell apoptosis. Promotes cell survival by phosphorylating AKT1/PKB that inhibits pro-apoptotic BAD/Bcl2-antagonist of cell death. In Rattus norvegicus (Rat), this protein is Calcium/calmodulin-dependent protein kinase kinase 1 (Camkk1).